The primary structure comprises 1261 residues: ABC-type transmembrane transporter verA (1261 aa).

A helical transmembrane segment spans residues 41-61 (IGCAFAAVCSGAAMPLMALIL). In terms of domain architecture, ABC transmembrane type-1 1 spans 41–334 (IGCAFAAVCS…LGPNMPSFIK (294 aa)). A glycan (N-linked (GlcNAc...) asparagine) is linked at asparagine 67. 5 helical membrane-spanning segments follow: residues 92–112 (LWFV…SFGF), 166–186 (LGIM…AFSQ), 190–210 (LTLV…FIVS), 270–290 (FVGL…AIGF), and 308–328 (ILSV…LGPN). The ABC transporter 1 domain occupies 374 to 618 (VELRDMSFAY…GGLYKRLYDA (245 aa)). Residue asparagine 396 is glycosylated (N-linked (GlcNAc...) asparagine). 409–416 (GPSGAGKS) contacts ATP. Residue asparagine 463 is glycosylated (N-linked (GlcNAc...) asparagine). Helical transmembrane passes span 686–706 (YWPI…IFPV), 734–754 (LMFF…GFFM), 808–828 (MGLL…GLAY), 830–850 (WKFA…AGYL), 913–933 (VMTL…ALGF), and 950–970 (FFTV…LFGF). In terms of domain architecture, ABC transmembrane type-1 2 spans 691–976 (LIGLVACVVT…LFGFSSNLGK (286 aa)). N-linked (GlcNAc...) asparagine glycosylation is found at asparagine 1007 and asparagine 1021. In terms of domain architecture, ABC transporter 2 spans 1017–1255 (VDMQNVTFAY…QGNYFKMHES (239 aa)). 1052–1059 (GTSGSGKS) is a binding site for ATP. Asparagine 1106 is a glycosylation site (N-linked (GlcNAc...) asparagine).

This sequence belongs to the ABC transporter superfamily. ABCB family. Multidrug resistance exporter (TC 3.A.1.201) subfamily.

The protein localises to the cell membrane. Functionally, ABC-type transmembrane transporter; part of the gene cluster that mediates the biosynthesis of 11'-deoxyverticillin A, one of the dimeric epipolythiodioxopiperazines (ETPs) from the verticillin family that are toxic secondary metabolites. The verA multidrug transporter is probably involved in the secretion of 11'-deoxyverticillin A. This is ABC-type transmembrane transporter verA from Clonostachys rogersoniana.